The chain runs to 122 residues: Small ribosomal subunit protein uS13 (122 aa).

The segment at 96-122 (LPVRGQRTKTNSRTRKGKRKTIAGKKK) is disordered. Residues 101 to 122 (QRTKTNSRTRKGKRKTIAGKKK) are compositionally biased toward basic residues.

Belongs to the universal ribosomal protein uS13 family. In terms of assembly, part of the 30S ribosomal subunit. Forms a loose heterodimer with protein S19. Forms two bridges to the 50S subunit in the 70S ribosome.

Its function is as follows. Located at the top of the head of the 30S subunit, it contacts several helices of the 16S rRNA. In the 70S ribosome it contacts the 23S rRNA (bridge B1a) and protein L5 of the 50S subunit (bridge B1b), connecting the 2 subunits; these bridges are implicated in subunit movement. Contacts the tRNAs in the A and P-sites. The sequence is that of Small ribosomal subunit protein uS13 from Chlamydia trachomatis serovar L2 (strain ATCC VR-902B / DSM 19102 / 434/Bu).